We begin with the raw amino-acid sequence, 895 residues long: Splicing factor 3B subunit 2 (895 aa).

Positions 1–10 are enriched in basic and acidic residues; that stretch reads MATEHPEPPK. Disordered regions lie at residues 1–24, 65–136, 197–373, and 400–453; these read MATE…PGHY, LNRP…LRVG, AKMG…EYVT, and KKEK…SKKK. A Glycyl lysine isopeptide (Lys-Gly) (interchain with G-Cter in SUMO2) cross-link involves residue K10. An SAP domain is found at 24 to 58; that stretch reads YGAWAAQELQAKLAEIGAPIQGNREELVERLQSYT. 2 stretches are compositionally biased toward pro residues: residues 90–114 and 122–133; these read IPMP…PPPG and AHPPNLGPPPPL. Positions 140-199 form a coiled coil; it reads ALSEEERLKLAQQQAALLMQQEERAKQQGDHSLKEHELLEQQKRAAVLLEQERQQEIAKM. Low complexity predominate over residues 218 to 238; it reads PLGPRVAAPVGPVGPTPTVLP. Omega-N-methylarginine occurs at positions 222, 245, and 247. Positions 241-254 are enriched in pro residues; it reads APVPRPRGPPPPPG. K275 carries the N6-acetyllysine modification. Positions 277–286 are enriched in basic and acidic residues; sequence LQLKESRQEE. K280 is covalently cross-linked (Glycyl lysine isopeptide (Lys-Gly) (interchain with G-Cter in SUMO2)). Position 289 is a phosphoserine (S289). T298 carries the post-translational modification Phosphothreonine. Phosphoserine is present on residues S307 and S309. Residue T311 is modified to Phosphothreonine. S317 is modified (phosphoserine). Residues 322–338 are compositionally biased toward basic residues; sequence EKNRKRRNRKKKKKPQR. Over residues 347–359 the composition is skewed to basic and acidic residues; the sequence is SGDREKDSTRSRG. Phosphoserine occurs at positions 360 and 362. Glycyl lysine isopeptide (Lys-Gly) (interchain with G-Cter in SUMO2) cross-links involve residues K400 and K412. Composition is skewed to basic and acidic residues over residues 400–414 and 422–431; these read KKEK…DKLE and KGFEEEHKDS. The required for interaction with PRMT9 stretch occupies residues 401–550; that stretch reads KEKEKEPEKL…QEKEEQKTMK (150 aa). 3 positions are modified to phosphoserine: S431, S435, and S436. Residue K492 forms a Glycyl lysine isopeptide (Lys-Gly) (interchain with G-Cter in SUMO2) linkage. Position 508 is an omega-N-methylarginine; by PRMT9; alternate (R508). Symmetric dimethylarginine; by PRMT9; alternate is present on R508. Omega-N-methylarginine is present on R515. K543 participates in a covalent cross-link: Glycyl lysine isopeptide (Lys-Gly) (interchain with G-Cter in SUMO2). Residues 691–757 form a disordered region; that stretch reads AAEFQTKTEE…PGGFSSVPAG (67 aa). The span at 712–732 shows a compositional bias: acidic residues; sequence EPSDEESSEEEEEEESDEDKP. K770 participates in a covalent cross-link: Glycyl lysine isopeptide (Lys-Gly) (interchain with G-Cter in SUMO2). A Phosphothreonine modification is found at T780. Residues K790, K843, and K857 each participate in a glycyl lysine isopeptide (Lys-Gly) (interchain with G-Cter in SUMO2) cross-link. A compositionally biased stretch (basic and acidic residues) spans 844 to 869; sequence YEEHVREQQAQVEKEDFSDMVAEHAA. Residues 844–895 form a disordered region; it reads YEEHVREQQAQVEKEDFSDMVAEHAAKQKQKKRKAQPQDSRGGSKKYKEFKF. Phosphoserine is present on S861.

In terms of assembly, component of the 17S U2 SnRNP complex, a ribonucleoprotein complex that contains small nuclear RNA (snRNA) U2 and a number of specific proteins. Part of the SF3B subcomplex of the 17S U2 SnRNP complex. SF3B associates with the splicing subcomplex SF3A and a 12S RNA unit to form the U2 small nuclear ribonucleoproteins complex (U2 snRNP). Within the SF3B complex, interacts directly with SF3B4. Found in a complex with PRMT9, SF3B2 and SF3B4. Interacts (Arg-508-methylated form) with SMN1 (via Tudor domain). Interacts with RBM7. Interacts with ERCC6. Component of the minor spliceosome. Within this complex, interacts with SCNM1 and CRIPT. As to quaternary structure, (Microbial infection) Interacts with HIV-1 Vpr. In terms of processing, methylation at Arg-508 by PRMT9 is required for the interaction with SMN1.

It is found in the nucleus. The protein resides in the nucleus speckle. Its function is as follows. Component of the 17S U2 SnRNP complex of the spliceosome, a large ribonucleoprotein complex that removes introns from transcribed pre-mRNAs. The 17S U2 SnRNP complex (1) directly participates in early spliceosome assembly and (2) mediates recognition of the intron branch site during pre-mRNA splicing by promoting the selection of the pre-mRNA branch-site adenosine, the nucleophile for the first step of splicing. Within the 17S U2 SnRNP complex, SF3B2 is part of the SF3B subcomplex, which is required for 'A' complex assembly formed by the stable binding of U2 snRNP to the branchpoint sequence in pre-mRNA. Sequence independent binding of SF3A and SF3B subcomplexes upstream of the branch site is essential, it may anchor U2 snRNP to the pre-mRNA. May also be involved in the assembly of the 'E' complex. Also acts as a component of the minor spliceosome, which is involved in the splicing of U12-type introns in pre-mRNAs. This chain is Splicing factor 3B subunit 2 (SF3B2), found in Homo sapiens (Human).